Here is a 133-residue protein sequence, read N- to C-terminus: ATP synthase epsilon chain (133 aa).

The protein belongs to the ATPase epsilon chain family. In terms of assembly, F-type ATPases have 2 components, CF(1) - the catalytic core - and CF(0) - the membrane proton channel. CF(1) has five subunits: alpha(3), beta(3), gamma(1), delta(1), epsilon(1). CF(0) has three main subunits: a, b and c.

The protein localises to the cell membrane. Functionally, produces ATP from ADP in the presence of a proton gradient across the membrane. In Mycoplasma pneumoniae (strain ATCC 29342 / M129 / Subtype 1) (Mycoplasmoides pneumoniae), this protein is ATP synthase epsilon chain (atpC).